We begin with the raw amino-acid sequence, 323 residues long: Beta-ketoacyl-[acyl-carrier-protein] synthase III (323 aa).

Catalysis depends on residues cysteine 113 and histidine 250. The interval 251-255 is ACP-binding; sequence QANRR. Asparagine 280 is an active-site residue.

The protein belongs to the thiolase-like superfamily. FabH family. Homodimer.

It localises to the cytoplasm. The enzyme catalyses malonyl-[ACP] + acetyl-CoA + H(+) = 3-oxobutanoyl-[ACP] + CO2 + CoA. The protein operates within lipid metabolism; fatty acid biosynthesis. Catalyzes the condensation reaction of fatty acid synthesis by the addition to an acyl acceptor of two carbons from malonyl-ACP. Catalyzes the first condensation reaction which initiates fatty acid synthesis and may therefore play a role in governing the total rate of fatty acid production. Possesses both acetoacetyl-ACP synthase and acetyl transacylase activities. Its substrate specificity determines the biosynthesis of branched-chain and/or straight-chain of fatty acids. This Rhizobium johnstonii (strain DSM 114642 / LMG 32736 / 3841) (Rhizobium leguminosarum bv. viciae) protein is Beta-ketoacyl-[acyl-carrier-protein] synthase III.